The primary structure comprises 118 residues: Large ribosomal subunit protein uL24 (118 aa).

This sequence belongs to the universal ribosomal protein uL24 family. As to quaternary structure, part of the 50S ribosomal subunit.

In terms of biological role, one of two assembly initiator proteins, it binds directly to the 5'-end of the 23S rRNA, where it nucleates assembly of the 50S subunit. Functionally, one of the proteins that surrounds the polypeptide exit tunnel on the outside of the subunit. This is Large ribosomal subunit protein uL24 from Synechococcus sp. (strain WH7803).